The chain runs to 339 residues: MSFFNIVIAILAFGVLILIHELGHFVLAKLNDVKVEEFAIGMGPKLLGIKGKETQYSIRALPIGGYVKMLGDESKSDDPRAFNNKSSARRLSIVIAGPIMNLILAAVLFCIVGMSEGIALPTVGKISANSPAQKIGIKAGDTIVKINNYSVHTWEDISFNMALNKGEGIKLALKNNGTIKKVTLVPQYSKKEKMYLIGISPKFIDKPTIIEGAKYGTSETVTMIKTVYLSLKMMVTGKASAKDVSGPVSIIKVTGAAANAGFIRLVNFIAFISAQLGVMNLLPIPALDGGFVFLFLFQMITGKKVDDDKVGFVNTIGFALLMILMIVVTIKDVVYPINF.

His20 serves as a coordination point for Zn(2+). Residue Glu21 is part of the active site. Position 24 (His24) interacts with Zn(2+). 3 helical membrane passes run 91–113 (LSIVIAGPIMNLILAAVLFCIVG), 275–297 (QLGVMNLLPIPALDGGFVFLFLF), and 310–330 (VGFVNTIGFALLMILMIVVTI). A PDZ domain is found at 99-177 (IMNLILAAVL…GIKLALKNNG (79 aa)).

This sequence belongs to the peptidase M50B family. Requires Zn(2+) as cofactor.

Its subcellular location is the cell membrane. This Clostridium acetobutylicum (strain ATCC 824 / DSM 792 / JCM 1419 / IAM 19013 / LMG 5710 / NBRC 13948 / NRRL B-527 / VKM B-1787 / 2291 / W) protein is Putative zinc metalloprotease CA_C1796.